The following is a 253-amino-acid chain: Transcriptional regulatory protein TcrA (253 aa).

A Response regulatory domain is found at Arg24–Ser138. Asp73 is subject to 4-aspartylphosphate. Positions Pro146–Lys244 form a DNA-binding region, ompR/PhoB-type.

As to quaternary structure, interacts with HK2. Post-translationally, phosphorylated by HK2.

The protein localises to the cytoplasm. In terms of biological role, member of the three-protein two-component system HK1/HK2/TcrA. The protein is Transcriptional regulatory protein TcrA (tcrA) of Mycobacterium tuberculosis (strain ATCC 25618 / H37Rv).